A 232-amino-acid chain; its full sequence is Small ribosomal subunit protein uS2 (232 aa).

This sequence belongs to the universal ribosomal protein uS2 family.

The polypeptide is Small ribosomal subunit protein uS2 (Desulforamulus reducens (strain ATCC BAA-1160 / DSM 100696 / MI-1) (Desulfotomaculum reducens)).